We begin with the raw amino-acid sequence, 149 residues long: D-aminoacyl-tRNA deacylase (149 aa).

The Gly-cisPro motif, important for rejection of L-amino acids motif lies at 137–138 (GP).

The protein belongs to the DTD family. As to quaternary structure, homodimer.

It localises to the cytoplasm. It catalyses the reaction glycyl-tRNA(Ala) + H2O = tRNA(Ala) + glycine + H(+). The enzyme catalyses a D-aminoacyl-tRNA + H2O = a tRNA + a D-alpha-amino acid + H(+). An aminoacyl-tRNA editing enzyme that deacylates mischarged D-aminoacyl-tRNAs. Also deacylates mischarged glycyl-tRNA(Ala), protecting cells against glycine mischarging by AlaRS. Acts via tRNA-based rather than protein-based catalysis; rejects L-amino acids rather than detecting D-amino acids in the active site. By recycling D-aminoacyl-tRNA to D-amino acids and free tRNA molecules, this enzyme counteracts the toxicity associated with the formation of D-aminoacyl-tRNA entities in vivo and helps enforce protein L-homochirality. The protein is D-aminoacyl-tRNA deacylase of Alkaliphilus metalliredigens (strain QYMF).